The following is a 329-amino-acid chain: 4-hydroxythreonine-4-phosphate dehydrogenase (329 aa).

Positions 136 and 137 each coordinate substrate. A divalent metal cation-binding residues include H166, H211, and H266. Positions 274, 283, and 292 each coordinate substrate.

This sequence belongs to the PdxA family. As to quaternary structure, homodimer. Zn(2+) is required as a cofactor. It depends on Mg(2+) as a cofactor. Requires Co(2+) as cofactor.

It localises to the cytoplasm. It carries out the reaction 4-(phosphooxy)-L-threonine + NAD(+) = 3-amino-2-oxopropyl phosphate + CO2 + NADH. It participates in cofactor biosynthesis; pyridoxine 5'-phosphate biosynthesis; pyridoxine 5'-phosphate from D-erythrose 4-phosphate: step 4/5. Catalyzes the NAD(P)-dependent oxidation of 4-(phosphooxy)-L-threonine (HTP) into 2-amino-3-oxo-4-(phosphooxy)butyric acid which spontaneously decarboxylates to form 3-amino-2-oxopropyl phosphate (AHAP). In Escherichia coli O81 (strain ED1a), this protein is 4-hydroxythreonine-4-phosphate dehydrogenase.